Reading from the N-terminus, the 61-residue chain is Large ribosomal subunit protein uL30 (61 aa).

It belongs to the universal ribosomal protein uL30 family. In terms of assembly, part of the 50S ribosomal subunit.

This is Large ribosomal subunit protein uL30 from Jannaschia sp. (strain CCS1).